The primary structure comprises 162 residues: Photosystem II extrinsic protein V (162 aa).

The first 25 residues, 1-25 (MFKKFSALFTLLFTLCLVNPMLVYS), serve as a signal peptide directing secretion. Heme c-binding residues include Cys62, Cys65, His66, and His117.

It belongs to the cytochrome c family. PsbV subfamily. As to quaternary structure, PSII is composed of 1 copy each of membrane proteins PsbA, PsbB, PsbC, PsbD, PsbE, PsbF, PsbH, PsbI, PsbJ, PsbK, PsbL, PsbM, PsbT, PsbX, PsbY, PsbZ, Psb30/Ycf12, at least 3 peripheral proteins of the oxygen-evolving complex and a large number of cofactors. It forms dimeric complexes. Requires heme c as cofactor.

It is found in the plastid. It localises to the chloroplast thylakoid membrane. Functionally, one of the extrinsic, lumenal subunits of photosystem II (PSII). PSII is a light-driven water plastoquinone oxidoreductase, using light energy to abstract electrons from H(2)O, generating a proton gradient subsequently used for ATP formation. The extrinsic proteins stabilize the structure of photosystem II oxygen-evolving complex (OEC), the ion environment of oxygen evolution and protect the OEC against heat-induced inactivation. The protein is Photosystem II extrinsic protein V of Guillardia theta (Cryptophyte).